The following is a 209-amino-acid chain: UPF0319 protein VFMJ11_1730 (209 aa).

The N-terminal stretch at 1 to 21 (MKIQSIFAASFCLLSSISAHA) is a signal peptide.

This sequence belongs to the UPF0319 family.

The polypeptide is UPF0319 protein VFMJ11_1730 (Aliivibrio fischeri (strain MJ11) (Vibrio fischeri)).